A 224-amino-acid polypeptide reads, in one-letter code: UPF0441 protein PC1_0312 (224 aa).

The interval P178–G224 is disordered. Low complexity predominate over residues R209 to G224.

It belongs to the UPF0441 family.

This chain is UPF0441 protein PC1_0312, found in Pectobacterium carotovorum subsp. carotovorum (strain PC1).